We begin with the raw amino-acid sequence, 1365 residues long: DNA-directed RNA polymerase subunit beta'' (1365 aa).

Zn(2+) is bound by residues Cys224, Cys295, Cys302, and Cys305.

The protein belongs to the RNA polymerase beta' chain family. RpoC2 subfamily. In plastids the minimal PEP RNA polymerase catalytic core is composed of four subunits: alpha, beta, beta', and beta''. When a (nuclear-encoded) sigma factor is associated with the core the holoenzyme is formed, which can initiate transcription. Zn(2+) is required as a cofactor.

The protein localises to the plastid. It localises to the chloroplast. The catalysed reaction is RNA(n) + a ribonucleoside 5'-triphosphate = RNA(n+1) + diphosphate. Its function is as follows. DNA-dependent RNA polymerase catalyzes the transcription of DNA into RNA using the four ribonucleoside triphosphates as substrates. The sequence is that of DNA-directed RNA polymerase subunit beta'' from Fagopyrum esculentum subsp. ancestrale (Wild buckwheat).